The following is a 247-amino-acid chain: Probable membrane transporter protein y4hK (247 aa).

6 helical membrane passes run 5-25 (AIGL…VGQA), 31-51 (IAAM…ALAL), 74-94 (VYPF…VHLP), 121-141 (SALV…ITGA), 202-222 (FLPW…LIGS), and 227-247 (ASWL…KLLW).

This sequence belongs to the 4-toluene sulfonate uptake permease (TSUP) (TC 2.A.102) family.

Its subcellular location is the cell membrane. This chain is Probable membrane transporter protein y4hK, found in Sinorhizobium fredii (strain NBRC 101917 / NGR234).